Reading from the N-terminus, the 527-residue chain is Flagellar radial spoke protein 5 (527 aa).

Residues 1–22 (MSEPGEEPVAAPAGPAPDPVLN) are disordered. A coiled-coil region spans residues 101 to 153 (RKWNELTIQAKQLEQEVAGLKGPDAEAKQAELENVKVQIADAEAAVAEVKQSF). Asymmetric dimethylarginine occurs at positions 191 and 366.

It belongs to the aldo/keto reductase family. In terms of processing, asymmetrically dimethylated at Arg-191 and Arg-366 during flagellum resorption. Probably methylated by PRMT1.

Its subcellular location is the cytoplasm. It localises to the cytoskeleton. The protein localises to the flagellum axoneme. In terms of biological role, flagellar radial spokes contribute to the regulation of dynein arm activity and thus the pattern of flagellar bending. They consist of a thin stalk, which is attached to the a subfiber of the outer doublet microtubule, and a bulbous head, which is attached to the stalk and appears to interact with the projections from the central pair of microtubules. This Chlamydomonas reinhardtii (Chlamydomonas smithii) protein is Flagellar radial spoke protein 5.